The sequence spans 218 residues: Ras-related protein RABA1h (218 aa).

20–27 (GDSGVGKS) lines the GTP pocket. Positions 42–50 (SRSTIGVEF) match the Effector region motif. Residues 68–72 (DTAGQ), 126–129 (NKAD), and 156–157 (SA) each bind GTP. 2 S-geranylgeranyl cysteine lipidation sites follow: cysteine 215 and cysteine 216.

It belongs to the small GTPase superfamily. Rab family.

Its subcellular location is the cell membrane. Intracellular vesicle trafficking and protein transport. This chain is Ras-related protein RABA1h (RABA1H), found in Arabidopsis thaliana (Mouse-ear cress).